The sequence spans 221 residues: Deoxyribose-phosphate aldolase (221 aa).

Catalysis depends on Asp-96, which acts as the Proton donor/acceptor. Lys-157 acts as the Schiff-base intermediate with acetaldehyde in catalysis. Lys-185 functions as the Proton donor/acceptor in the catalytic mechanism.

The protein belongs to the DeoC/FbaB aldolase family. DeoC type 1 subfamily.

The protein resides in the cytoplasm. The catalysed reaction is 2-deoxy-D-ribose 5-phosphate = D-glyceraldehyde 3-phosphate + acetaldehyde. The protein operates within carbohydrate degradation; 2-deoxy-D-ribose 1-phosphate degradation; D-glyceraldehyde 3-phosphate and acetaldehyde from 2-deoxy-alpha-D-ribose 1-phosphate: step 2/2. Catalyzes a reversible aldol reaction between acetaldehyde and D-glyceraldehyde 3-phosphate to generate 2-deoxy-D-ribose 5-phosphate. The sequence is that of Deoxyribose-phosphate aldolase from Crocosphaera subtropica (strain ATCC 51142 / BH68) (Cyanothece sp. (strain ATCC 51142)).